The sequence spans 79 residues: MVERSQHLQDVFLNTVRKQKISLTIFLVNGVKLTGIVTSFDNFCVLLRRDGHAQLVYKHAISTIMPGQPVQMFEGESSE.

The Sm domain occupies 10–70; the sequence is DVFLNTVRKQ…ISTIMPGQPV (61 aa).

It belongs to the Hfq family. As to quaternary structure, homohexamer.

Its function is as follows. RNA chaperone that binds small regulatory RNA (sRNAs) and mRNAs to facilitate mRNA translational regulation in response to envelope stress, environmental stress and changes in metabolite concentrations. Also binds with high specificity to tRNAs. This is RNA-binding protein Hfq from Bartonella henselae (strain ATCC 49882 / DSM 28221 / CCUG 30454 / Houston 1) (Rochalimaea henselae).